Here is a 387-residue protein sequence, read N- to C-terminus: 1-deoxy-D-xylulose 5-phosphate reductoisomerase (387 aa).

Threonine 10, glycine 11, serine 12, isoleucine 13, glycine 36, asparagine 38, and asparagine 122 together coordinate NADPH. Lysine 123 is a 1-deoxy-D-xylulose 5-phosphate binding site. Residue glutamate 124 participates in NADPH binding. Residue aspartate 148 participates in Mn(2+) binding. 1-deoxy-D-xylulose 5-phosphate contacts are provided by serine 149, glutamate 150, serine 174, and histidine 197. Glutamate 150 provides a ligand contact to Mn(2+). Residue glycine 203 participates in NADPH binding. The 1-deoxy-D-xylulose 5-phosphate site is built by serine 210, asparagine 215, lysine 216, and glutamate 219. Residue glutamate 219 participates in Mn(2+) binding.

The protein belongs to the DXR family. It depends on Mg(2+) as a cofactor. Requires Mn(2+) as cofactor.

The catalysed reaction is 2-C-methyl-D-erythritol 4-phosphate + NADP(+) = 1-deoxy-D-xylulose 5-phosphate + NADPH + H(+). It functions in the pathway isoprenoid biosynthesis; isopentenyl diphosphate biosynthesis via DXP pathway; isopentenyl diphosphate from 1-deoxy-D-xylulose 5-phosphate: step 1/6. Functionally, catalyzes the NADPH-dependent rearrangement and reduction of 1-deoxy-D-xylulose-5-phosphate (DXP) to 2-C-methyl-D-erythritol 4-phosphate (MEP). This is 1-deoxy-D-xylulose 5-phosphate reductoisomerase from Chloroherpeton thalassium (strain ATCC 35110 / GB-78).